Here is an 86-residue protein sequence, read N- to C-terminus: Small ribosomal subunit protein uS15 (86 aa).

It belongs to the universal ribosomal protein uS15 family. In terms of assembly, part of the 30S ribosomal subunit. Forms a bridge to the 50S subunit in the 70S ribosome, contacting the 23S rRNA.

In terms of biological role, one of the primary rRNA binding proteins, it binds directly to 16S rRNA where it helps nucleate assembly of the platform of the 30S subunit by binding and bridging several RNA helices of the 16S rRNA. Forms an intersubunit bridge (bridge B4) with the 23S rRNA of the 50S subunit in the ribosome. In Endomicrobium trichonymphae, this protein is Small ribosomal subunit protein uS15.